Reading from the N-terminus, the 951-residue chain is Valine--tRNA ligase (951 aa).

Positions Pro42–His52 match the 'HIGH' region motif. Residues Lys554 to Ser558 carry the 'KMSKS' region motif. Residue Lys557 participates in ATP binding. Residues Ala880 to Gln944 are a coiled coil.

This sequence belongs to the class-I aminoacyl-tRNA synthetase family. ValS type 1 subfamily. In terms of assembly, monomer.

Its subcellular location is the cytoplasm. It catalyses the reaction tRNA(Val) + L-valine + ATP = L-valyl-tRNA(Val) + AMP + diphosphate. In terms of biological role, catalyzes the attachment of valine to tRNA(Val). As ValRS can inadvertently accommodate and process structurally similar amino acids such as threonine, to avoid such errors, it has a 'posttransfer' editing activity that hydrolyzes mischarged Thr-tRNA(Val) in a tRNA-dependent manner. This chain is Valine--tRNA ligase, found in Shigella flexneri.